Consider the following 500-residue polypeptide: Probable malate:quinone oxidoreductase (500 aa).

It belongs to the MQO family. It depends on FAD as a cofactor.

The enzyme catalyses (S)-malate + a quinone = a quinol + oxaloacetate. The protein operates within carbohydrate metabolism; tricarboxylic acid cycle; oxaloacetate from (S)-malate (quinone route): step 1/1. This chain is Probable malate:quinone oxidoreductase, found in Bacillus cereus (strain ZK / E33L).